A 163-amino-acid chain; its full sequence is Photosystem II extrinsic protein V (163 aa).

The first 26 residues, M1–A26, serve as a signal peptide directing secretion. C63, C66, H67, and H118 together coordinate heme c.

It belongs to the cytochrome c family. PsbV subfamily. In terms of assembly, PSII is composed of 1 copy each of membrane proteins PsbA, PsbB, PsbC, PsbD, PsbE, PsbF, PsbH, PsbI, PsbJ, PsbK, PsbL, PsbM, PsbT, PsbX, PsbY, PsbZ, Psb30/Ycf12, peripheral proteins PsbO, CyanoQ (PsbQ), PsbU, PsbV and a large number of cofactors. It forms dimeric complexes. Heme c is required as a cofactor.

Its subcellular location is the cellular thylakoid membrane. One of the extrinsic, lumenal subunits of photosystem II (PSII). PSII is a light-driven water plastoquinone oxidoreductase, using light energy to abstract electrons from H(2)O, generating a proton gradient subsequently used for ATP formation. The extrinsic proteins stabilize the structure of photosystem II oxygen-evolving complex (OEC), the ion environment of oxygen evolution and protect the OEC against heat-induced inactivation. Low-potential cytochrome c that plays a role in the OEC of PSII. The protein is Photosystem II extrinsic protein V of Nostoc punctiforme (strain ATCC 29133 / PCC 73102).